The following is a 217-amino-acid chain: GTP cyclohydrolase 1 (217 aa).

Zn(2+) contacts are provided by Cys109, His112, and Cys180.

It belongs to the GTP cyclohydrolase I family. As to quaternary structure, toroid-shaped homodecamer, composed of two pentamers of five dimers.

It carries out the reaction GTP + H2O = 7,8-dihydroneopterin 3'-triphosphate + formate + H(+). It participates in cofactor biosynthesis; 7,8-dihydroneopterin triphosphate biosynthesis; 7,8-dihydroneopterin triphosphate from GTP: step 1/1. The chain is GTP cyclohydrolase 1 from Photobacterium profundum (strain SS9).